Consider the following 325-residue polypeptide: Protease HtpX homolog (325 aa).

The chain crosses the membrane as a helical span at residues 20-40 (IGYLLGGGGGMMIALVIAVAM). Position 130 (histidine 130) interacts with Zn(2+). Residue glutamate 131 is part of the active site. Histidine 134 contacts Zn(2+). 2 helical membrane passes run 145–165 (IVAT…FLGG) and 173–193 (VMGV…AMIV). Glutamate 202 is a Zn(2+) binding site. Residues 286–325 (SAAMTARAAAPSQNSGPWGQRSDNAGGNSNGGSRYRGPWS) are disordered. Positions 306-325 (RSDNAGGNSNGGSRYRGPWS) are enriched in low complexity.

Belongs to the peptidase M48B family. The cofactor is Zn(2+).

The protein resides in the cell inner membrane. The polypeptide is Protease HtpX homolog (Brucella melitensis biotype 2 (strain ATCC 23457)).